Consider the following 209-residue polypeptide: Putative 3-methyladenine DNA glycosylase (209 aa).

The segment at 189–209 (HVSTTRLGAPKKKRQKRLERR) is disordered. The span at 197–209 (APKKKRQKRLERR) shows a compositional bias: basic residues.

This sequence belongs to the DNA glycosylase MPG family.

This is Putative 3-methyladenine DNA glycosylase from Chlorobaculum parvum (strain DSM 263 / NCIMB 8327) (Chlorobium vibrioforme subsp. thiosulfatophilum).